An 80-amino-acid chain; its full sequence is Exodeoxyribonuclease 7 small subunit (80 aa).

The protein belongs to the XseB family. In terms of assembly, heterooligomer composed of large and small subunits.

It localises to the cytoplasm. The catalysed reaction is Exonucleolytic cleavage in either 5'- to 3'- or 3'- to 5'-direction to yield nucleoside 5'-phosphates.. Its function is as follows. Bidirectionally degrades single-stranded DNA into large acid-insoluble oligonucleotides, which are then degraded further into small acid-soluble oligonucleotides. In Pseudomonas paraeruginosa (strain DSM 24068 / PA7) (Pseudomonas aeruginosa (strain PA7)), this protein is Exodeoxyribonuclease 7 small subunit.